A 393-amino-acid chain; its full sequence is Protein TsgA (393 aa).

The next 12 membrane-spanning stretches (helical) occupy residues 11-31 (WISF…GMVM), 51-71 (FLNA…EIIP), 78-98 (FGFI…SLAL), 101-121 (AAMF…TFLI), 134-154 (LLFT…VAAF), 162-182 (WYWV…LTFG), 206-226 (IGVL…LGFI), 245-265 (ALVS…SFIL), 273-293 (ILTV…TGTQ), 298-318 (WFIL…ITLG), 332-352 (FILT…GPIV), and 361-381 (LLTA…LGFV).

The protein belongs to the major facilitator superfamily. TsgA family.

The protein resides in the cell inner membrane. The chain is Protein TsgA from Salmonella paratyphi B (strain ATCC BAA-1250 / SPB7).